The following is a 229-amino-acid chain: DNA repair protein RecO (229 aa).

It belongs to the RecO family.

Its function is as follows. Involved in DNA repair and RecF pathway recombination. In Legionella pneumophila (strain Corby), this protein is DNA repair protein RecO.